A 582-amino-acid chain; its full sequence is ATP-dependent lipid A-core flippase (582 aa).

5 helical membrane-spanning segments follow: residues W25–A45, V64–M84, A142–W162, W165–T185, and V253–L273. An ABC transmembrane type-1 domain is found at V29–R309. Positions I342–M577 constitute an ABC transporter domain. G375–S382 contacts ATP.

This sequence belongs to the ABC transporter superfamily. Lipid exporter (TC 3.A.1.106) family. Homodimer.

It localises to the cell inner membrane. It catalyses the reaction ATP + H2O + lipid A-core oligosaccharideSide 1 = ADP + phosphate + lipid A-core oligosaccharideSide 2.. Its function is as follows. Involved in lipopolysaccharide (LPS) biosynthesis. Translocates lipid A-core from the inner to the outer leaflet of the inner membrane. Transmembrane domains (TMD) form a pore in the inner membrane and the ATP-binding domain (NBD) is responsible for energy generation. This chain is ATP-dependent lipid A-core flippase, found in Alcanivorax borkumensis (strain ATCC 700651 / DSM 11573 / NCIMB 13689 / SK2).